A 183-amino-acid polypeptide reads, in one-letter code: Protein Syd (183 aa).

This sequence belongs to the Syd family.

It localises to the cell inner membrane. Interacts with the SecY protein in vivo. May bind preferentially to an uncomplexed state of SecY, thus functioning either as a chelating agent for excess SecY in the cell or as a regulatory factor that negatively controls the translocase function. In Yersinia enterocolitica serotype O:8 / biotype 1B (strain NCTC 13174 / 8081), this protein is Protein Syd.